The primary structure comprises 152 residues: SKP1-like protein 12 (152 aa).

Residues 94-152 form an interaction with the F-box domain of F-box proteins region; that stretch reads ILAANYLNIKSLFDLTCQTVADMIKGKTPEEIRSTFNIENDFTPEEEEAVRKENQWAFE.

It belongs to the SKP1 family. Part of a SCF (SKP1-cullin-F-box) protein ligase complex. Interacts with ADO3/FKF1, COI1/FBL2, EBF1/FBL6, PP2B10, At3g61590 and At5g49610. In terms of tissue distribution, expressed in young seedlings, roots, leaves, floral stems, inflorescences, and siliques, with a slightly higher level in inflorescence than in other tissues.

The protein resides in the nucleus. It functions in the pathway protein modification; protein ubiquitination. Functionally, involved in ubiquitination and subsequent proteasomal degradation of target proteins. Together with CUL1, RBX1 and a F-box protein, it forms a SCF E3 ubiquitin ligase complex. The functional specificity of this complex depends on the type of F-box protein. In the SCF complex, it serves as an adapter that links the F-box protein to CUL1. Plays a role during early flowers reproductive development. The protein is SKP1-like protein 12 (ASK12) of Arabidopsis thaliana (Mouse-ear cress).